A 188-amino-acid chain; its full sequence is Large ribosomal subunit protein eL18 (188 aa).

Positions 153–188 are disordered; sequence GKAPGTPHSHTKPYIRSKGRKFERARGRRASRGYKN. Basic residues-rich tracts occupy residues 161–171 and 178–188; these read SHTKPYIRSKG and RGRRASRGYKN.

This sequence belongs to the eukaryotic ribosomal protein eL18 family. Component of the large ribosomal subunit.

Its subcellular location is the cytoplasm. It is found in the cytosol. The protein localises to the rough endoplasmic reticulum. Its function is as follows. Component of the large ribosomal subunit. The ribosome is a large ribonucleoprotein complex responsible for the synthesis of proteins in the cell. The protein is Large ribosomal subunit protein eL18 (rpl18) of Ictalurus punctatus (Channel catfish).